The sequence spans 822 residues: Protein smoothened (822 aa).

A signal peptide spans 1–28 (MSSKRPCSIVGSFWMLWIWTATSMVARA). The Extracellular segment spans residues 29–212 (VILHPNETIF…EDEHSDMHSY (184 aa)). Asn-34 carries an N-linked (GlcNAc...) asparagine glycan. 5 disulfide bridges follow: Cys-42–Cys-157, Cys-48–Cys-112, Cys-56–Cys-105, Cys-96–Cys-132, and Cys-125–Cys-147. In terms of domain architecture, FZ spans 43-160 (KKSTTCEVLK…EQFPKGCQNE (118 aa)). Asp-73 contacts cholesterol. A glycan (N-linked (GlcNAc...) asparagine) is linked at Asn-167. 3 disulfide bridges follow: Cys-172–Cys-192, Cys-196–Cys-274, and Cys-293–Cys-369. A helical transmembrane segment spans residues 213 to 233 (IAVFGTITLLCTFFTLATFLA). Residues 234–241 (DWKNSNRY) are Cytoplasmic-facing. A helical transmembrane segment spans residues 242–262 (PAVILFYVNACFFIGSIGWLA). Residues 263 to 293 (QFMDGARNEIVCKSDNTMRLGEPSSTETLSC) are Extracellular-facing. A helical membrane pass occupies residues 294–314 (VIIFVIVYYSLMSGVIWFVML). The Cytoplasmic portion of the chain corresponds to 315–335 (TYAWHTSFKALGTTHQPLSGK). The chain crosses the membrane as a helical span at residues 336 to 356 (TSYFHLVTWSIPFILTVAILA). At 357–381 (NSQVDADSVSGICFVGYRYYEYRAG) the chain is on the extracellular side. Residue Tyr-373 coordinates cholesterol. The helical transmembrane segment at 382–402 (FVLAPIGFVLVIGGYFLIRGV) threads the bilayer. Residues 403–430 (MTLFSIKSNHPGLLSEKAASKINETMLR) lie on the Cytoplasmic side of the membrane. A helical transmembrane segment spans residues 431–451 (LGIFGFLAFGFVLITFGCHFY). Residues 452 to 503 (DFFNQAEWERSFREYVLCEANVTIAHQTNKPIPECAIKNRPSLLVGKINLFS) are Extracellular-facing. Residues Cys-469 and Cys-486 are joined by a disulfide bond. Residue Asn-472 is glycosylated (N-linked (GlcNAc...) asparagine). The helical transmembrane segment at 504-524 (MFGTGIAMSTWVWTKATILIW) threads the bilayer. Residues 525-822 (KRTWFRIIGR…AELLDADSDF (298 aa)) lie on the Cytoplasmic side of the membrane. The segment at 645-687 (MMKRKKKKKKRRKEVRPAGPAADEGNPAYHRREFGPSAVPRLP) is disordered. The segment covering 647-658 (KRKKKKKKRRKE) has biased composition (basic residues).

The protein belongs to the G-protein coupled receptor Fz/Smo family. As to quaternary structure, monomer.

It localises to the cell membrane. It is found in the cell projection. The protein resides in the cilium. Its function is as follows. G protein-coupled receptor which associates with the patched protein (ptch) to transduce Hedgehog protein signaling. Binding of sonic hedgehog (shh) to its receptor patched prevents inhibition of smoothened (smo) by patched. When active, smo binds to and sequesters protein kinase A catalytic subunit prkaca at the cell membrane, preventing prkaca-mediated phosphorylation of gli transcription factors which releases the gli proteins from prkaca-mediated inhibition and allows for transcriptional activation of Hedgehog signaling pathway target genes. Required for the development of primary and secondary motoneurons but not for the specification of midbrain dopaminergic neurons or development of the medial floor plate. Required for induction of lateral floor plate and posterior motoneurons, anterior neural plate patterning, dorsoventral forebrain patterning, dorsoventral retinal patterning, optic stalk development, and formation of the forebrain primary axonal scaffold. Required to regulate the formation of a subset of cerebellar neurons by limiting wnt1 expression which controls cerebellar expression of transcription factor olig2. Required for development of the pancreas. Required for muscle development. Required for the formation of a single continuous intestinal lumen from multiple discontinuous lumens, probably by regulating remodeling through rab11a-mediated trafficking to facilitate lumen fusion. Required for development of the adenohypophysis. Required for anteroposterior patterning of the otic vesicle. Required for development of the anterior craniofacial skeleton. Required for patterning of the caudal fin. Required during gastrulation and early somitogenesis stages to promote cardiomyocyte formation by regulating the specification of myocardial progenitors. Required for induction of arterial endothelial cell formation by repressing venous cell fate. The protein is Protein smoothened of Danio rerio (Zebrafish).